Reading from the N-terminus, the 312-residue chain is Malate dehydrogenase (312 aa).

Residues 7–13 (GAAGGIG) and Asp34 each bind NAD(+). The substrate site is built by Arg81 and Arg87. Residues Asn94 and 117–119 (ITN) each bind NAD(+). The substrate site is built by Asn119 and Arg153. The active-site Proton acceptor is His177. Met227 is an NAD(+) binding site.

The protein belongs to the LDH/MDH superfamily. MDH type 1 family. As to quaternary structure, homodimer.

It carries out the reaction (S)-malate + NAD(+) = oxaloacetate + NADH + H(+). In terms of biological role, catalyzes the reversible oxidation of malate to oxaloacetate. The polypeptide is Malate dehydrogenase (Salmonella gallinarum (strain 287/91 / NCTC 13346)).